We begin with the raw amino-acid sequence, 228 residues long: Probable septum site-determining protein MinC (228 aa).

It belongs to the MinC family. Interacts with MinD and FtsZ.

Its function is as follows. Cell division inhibitor that blocks the formation of polar Z ring septums. Rapidly oscillates between the poles of the cell to destabilize FtsZ filaments that have formed before they mature into polar Z rings. Prevents FtsZ polymerization. The chain is Probable septum site-determining protein MinC from Symbiobacterium thermophilum (strain DSM 24528 / JCM 14929 / IAM 14863 / T).